A 209-amino-acid chain; its full sequence is Ribosomal RNA large subunit methyltransferase E (209 aa).

S-adenosyl-L-methionine contacts are provided by Gly63, Trp65, Asp83, Asp99, and Asp124. Catalysis depends on Lys164, which acts as the Proton acceptor.

It belongs to the class I-like SAM-binding methyltransferase superfamily. RNA methyltransferase RlmE family.

Its subcellular location is the cytoplasm. The catalysed reaction is uridine(2552) in 23S rRNA + S-adenosyl-L-methionine = 2'-O-methyluridine(2552) in 23S rRNA + S-adenosyl-L-homocysteine + H(+). Functionally, specifically methylates the uridine in position 2552 of 23S rRNA at the 2'-O position of the ribose in the fully assembled 50S ribosomal subunit. The sequence is that of Ribosomal RNA large subunit methyltransferase E from Yersinia enterocolitica serotype O:8 / biotype 1B (strain NCTC 13174 / 8081).